The sequence spans 126 residues: Small ribosomal subunit protein uS12 (126 aa).

Residue Asp89 is modified to 3-methylthioaspartic acid.

It belongs to the universal ribosomal protein uS12 family. In terms of assembly, part of the 30S ribosomal subunit. Contacts proteins S8 and S17. May interact with IF1 in the 30S initiation complex.

In terms of biological role, with S4 and S5 plays an important role in translational accuracy. Interacts with and stabilizes bases of the 16S rRNA that are involved in tRNA selection in the A site and with the mRNA backbone. Located at the interface of the 30S and 50S subunits, it traverses the body of the 30S subunit contacting proteins on the other side and probably holding the rRNA structure together. The combined cluster of proteins S8, S12 and S17 appears to hold together the shoulder and platform of the 30S subunit. In Polynucleobacter necessarius subsp. necessarius (strain STIR1), this protein is Small ribosomal subunit protein uS12.